The following is a 454-amino-acid chain: UDP-N-acetylmuramate--L-alanine ligase (454 aa).

Gly-112 to Thr-118 lines the ATP pocket.

It belongs to the MurCDEF family.

The protein resides in the cytoplasm. The enzyme catalyses UDP-N-acetyl-alpha-D-muramate + L-alanine + ATP = UDP-N-acetyl-alpha-D-muramoyl-L-alanine + ADP + phosphate + H(+). It participates in cell wall biogenesis; peptidoglycan biosynthesis. Its function is as follows. Cell wall formation. The sequence is that of UDP-N-acetylmuramate--L-alanine ligase from Oleidesulfovibrio alaskensis (strain ATCC BAA-1058 / DSM 17464 / G20) (Desulfovibrio alaskensis).